We begin with the raw amino-acid sequence, 250 residues long: Golgi SNAP receptor complex member 1 (250 aa).

A2 bears the N-acetylalanine mark. Over 2-229 the chain is Cytoplasmic; sequence AAGTSNYWED…QRINLRKRRD (228 aa). The stretch at 9–30 forms a coiled coil; it reads WEDLRKQARQLENELDLKLVSF. Residues 38-59 form a disordered region; that stretch reads SHSSARDGGRDRYSSDTTPLLN. Positions 41–51 are enriched in basic and acidic residues; the sequence is SARDGGRDRYS. Residues 68–95 are a coiled coil; it reads ETMAIEIEQLLARLTGVNDKMAEYTNSA. At S141 the chain carries Phosphoserine. The helical; Anchor for type IV membrane protein transmembrane segment at 230 to 250 threads the bilayer; that stretch reads SLILGGVIGICTILLLLYAFH.

This sequence belongs to the GOSR1 family. Component of several multiprotein Golgi SNARE complexes. Identified in a SNARE complex with BET1, STX5 and YKT6, in a SNARE complex with BET1L, STX5 and YKT6, in a SNARE complex with STX5, GOSR2, SEC22B and BET1, and in complex with STX5 and COG3. Interacts with GABARAPL2.

The protein localises to the golgi apparatus membrane. Involved in transport from the ER to the Golgi apparatus as well as in intra-Golgi transport. It belongs to a super-family of proteins called t-SNAREs or soluble NSF (N-ethylmaleimide-sensitive factor) attachment protein receptor. May play a protective role against hydrogen peroxide induced cytotoxicity under glutathione depleted conditions in neuronal cells by regulating the intracellular ROS levels via inhibition of p38 MAPK (MAPK11, MAPK12, MAPK13 and MAPK14). Participates in docking and fusion stage of ER to cis-Golgi transport. Plays an important physiological role in VLDL-transport vesicle-Golgi fusion and thus in VLDL delivery to the hepatic cis-Golgi. The protein is Golgi SNAP receptor complex member 1 (GOSR1) of Cricetulus griseus (Chinese hamster).